The primary structure comprises 199 residues: Thymidine kinase (199 aa).

Residues 9–16 and 93–96 each bind ATP; these read GAMSSGKS and DEAQ. Catalysis depends on Glu-94, which acts as the Proton acceptor. Zn(2+)-binding residues include Cys-151, Cys-154, Cys-188, and His-191.

This sequence belongs to the thymidine kinase family. As to quaternary structure, homotetramer.

It is found in the cytoplasm. It catalyses the reaction thymidine + ATP = dTMP + ADP + H(+). This is Thymidine kinase from Lactobacillus johnsonii (strain CNCM I-12250 / La1 / NCC 533).